The following is a 457-amino-acid chain: Beta-1,4-mannosyltransferase egh (457 aa).

6 helical membrane passes run 8 to 28, 35 to 55, 57 to 77, 346 to 366, 378 to 398, and 415 to 435; these read LLHC…SGGI, FTLV…LYLL, FLTL…VFYN, LLGI…NIIF, VDFV…FGVI, and VLGA…AVIW.

This sequence belongs to the glycosyltransferase 2 family.

The protein resides in the membrane. In terms of biological role, glycosyltransferase with a proposed role in glycosphingolipid biosynthesis. Neurogenic protein implicated in epithelial development. Critical component of a differential oocyte-follicle cell adhesive system. This chain is Beta-1,4-mannosyltransferase egh (egh), found in Drosophila melanogaster (Fruit fly).